The primary structure comprises 376 residues: Actin-related protein T1 (376 aa).

It belongs to the actin family.

It localises to the cytoplasm. The protein localises to the cytoskeleton. Its subcellular location is the nucleus. The protein resides in the cytoplasmic vesicle. It is found in the secretory vesicle. It localises to the acrosome. Functionally, negatively regulates the Hedgehog (SHH) signaling. Binds to the promoter of the SHH signaling mediator, GLI1, and inhibits its expression. This is Actin-related protein T1 (Actrt1) from Rattus norvegicus (Rat).